The primary structure comprises 689 residues: Translation initiation factor IF-2 (689 aa).

Positions 70-107 are disordered; it reads VRSKKNSNKKKKKGKGNQDKRQENFAGKQQAQTVETPD. Residues 71-84 are compositionally biased toward basic residues; sequence RSKKNSNKKKKKGK. In terms of domain architecture, tr-type G spans 191 to 360; it reads ERPAVVTIMG…LLVSEVEEYK (170 aa). Positions 200 to 207 are G1; that stretch reads GHVDHGKT. 200 to 207 contacts GTP; the sequence is GHVDHGKT. Residues 225 to 229 form a G2 region; it reads GITQH. The segment at 246 to 249 is G3; sequence DTPG. GTP is bound by residues 246 to 250 and 300 to 303; these read DTPGH and NKMD. The G4 stretch occupies residues 300–303; the sequence is NKMD. The tract at residues 336 to 338 is G5; that stretch reads SAI.

The protein belongs to the TRAFAC class translation factor GTPase superfamily. Classic translation factor GTPase family. IF-2 subfamily.

Its subcellular location is the cytoplasm. In terms of biological role, one of the essential components for the initiation of protein synthesis. Protects formylmethionyl-tRNA from spontaneous hydrolysis and promotes its binding to the 30S ribosomal subunits. Also involved in the hydrolysis of GTP during the formation of the 70S ribosomal complex. In Bacillus cytotoxicus (strain DSM 22905 / CIP 110041 / 391-98 / NVH 391-98), this protein is Translation initiation factor IF-2.